Consider the following 505-residue polypeptide: Deoxyguanosinetriphosphate triphosphohydrolase (505 aa).

The HD domain maps to 66–273 (RLTHSMEVQQ…MEAADDISYC (208 aa)).

Belongs to the dGTPase family. Type 1 subfamily. Homotetramer. It depends on Mg(2+) as a cofactor.

The enzyme catalyses dGTP + H2O = 2'-deoxyguanosine + triphosphate + H(+). In terms of biological role, dGTPase preferentially hydrolyzes dGTP over the other canonical NTPs. The chain is Deoxyguanosinetriphosphate triphosphohydrolase from Escherichia coli O127:H6 (strain E2348/69 / EPEC).